Reading from the N-terminus, the 489-residue chain is Glutamate--tRNA ligase (489 aa).

Residues 11–21 (PSPTGHLHIGN) carry the 'HIGH' region motif. The 'KMSKS' region motif lies at 252 to 256 (KLSKR). Lys255 is a binding site for ATP.

This sequence belongs to the class-I aminoacyl-tRNA synthetase family. Glutamate--tRNA ligase type 1 subfamily. As to quaternary structure, monomer.

It localises to the cytoplasm. It carries out the reaction tRNA(Glu) + L-glutamate + ATP = L-glutamyl-tRNA(Glu) + AMP + diphosphate. Its function is as follows. Catalyzes the attachment of glutamate to tRNA(Glu) in a two-step reaction: glutamate is first activated by ATP to form Glu-AMP and then transferred to the acceptor end of tRNA(Glu). This chain is Glutamate--tRNA ligase, found in Oceanobacillus iheyensis (strain DSM 14371 / CIP 107618 / JCM 11309 / KCTC 3954 / HTE831).